We begin with the raw amino-acid sequence, 313 residues long: 4-diphosphocytidyl-2-C-methyl-D-erythritol kinase (313 aa).

Lys29 is a catalytic residue. 113 to 123 is a binding site for ATP; it reads PMGGGVGGGSS. The active site involves Asp155.

Belongs to the GHMP kinase family. IspE subfamily.

It catalyses the reaction 4-CDP-2-C-methyl-D-erythritol + ATP = 4-CDP-2-C-methyl-D-erythritol 2-phosphate + ADP + H(+). The protein operates within isoprenoid biosynthesis; isopentenyl diphosphate biosynthesis via DXP pathway; isopentenyl diphosphate from 1-deoxy-D-xylulose 5-phosphate: step 3/6. Its function is as follows. Catalyzes the phosphorylation of the position 2 hydroxy group of 4-diphosphocytidyl-2C-methyl-D-erythritol. The protein is 4-diphosphocytidyl-2-C-methyl-D-erythritol kinase of Haemophilus influenzae (strain ATCC 51907 / DSM 11121 / KW20 / Rd).